A 423-amino-acid chain; its full sequence is CDP-diacylglycerol--serine O-phosphatidyltransferase 2 (423 aa).

Helical transmembrane passes span Pro38–Leu58, Trp77–Ile97, Val103–Phe123, Leu195–Leu215, Trp222–Met242, Phe294–Leu314, Trp319–Ile339, Gly359–Phe379, and Thr390–Trp410.

This sequence belongs to the CDP-alcohol phosphatidyltransferase class-I family.

It localises to the endoplasmic reticulum membrane. It catalyses the reaction a CDP-1,2-diacyl-sn-glycerol + L-serine = a 1,2-diacyl-sn-glycero-3-phospho-L-serine + CMP + H(+). It participates in phospholipid metabolism; phosphatidylethanolamine biosynthesis; phosphatidylethanolamine from CDP-diacylglycerol: step 1/2. Catalyzes a base-exchange reaction in which the polar head group of phosphatidylethanolamine (PE) or phosphatidylcholine (PC) is replaced by L-serine. In Oryza sativa subsp. japonica (Rice), this protein is CDP-diacylglycerol--serine O-phosphatidyltransferase 2 (PSS2).